The sequence spans 366 residues: Chorismate synthase (366 aa).

2 residues coordinate NADP(+): Arg-48 and Arg-54. FMN is bound by residues 125–127 (RSS), 238–239 (NA), Gly-278, 293–297 (KPTSS), and Arg-319.

Belongs to the chorismate synthase family. As to quaternary structure, homotetramer. Requires FMNH2 as cofactor.

It carries out the reaction 5-O-(1-carboxyvinyl)-3-phosphoshikimate = chorismate + phosphate. It functions in the pathway metabolic intermediate biosynthesis; chorismate biosynthesis; chorismate from D-erythrose 4-phosphate and phosphoenolpyruvate: step 7/7. Its function is as follows. Catalyzes the anti-1,4-elimination of the C-3 phosphate and the C-6 proR hydrogen from 5-enolpyruvylshikimate-3-phosphate (EPSP) to yield chorismate, which is the branch point compound that serves as the starting substrate for the three terminal pathways of aromatic amino acid biosynthesis. This reaction introduces a second double bond into the aromatic ring system. This is Chorismate synthase from Burkholderia cenocepacia (strain HI2424).